Reading from the N-terminus, the 242-residue chain is Biosynthetic peptidoglycan transglycosylase (242 aa).

Residues 19–39 (LMVVLAVFWGGGIALFSVAPV) traverse the membrane as a helical segment.

This sequence belongs to the glycosyltransferase 51 family.

It localises to the cell inner membrane. It carries out the reaction [GlcNAc-(1-&gt;4)-Mur2Ac(oyl-L-Ala-gamma-D-Glu-L-Lys-D-Ala-D-Ala)](n)-di-trans,octa-cis-undecaprenyl diphosphate + beta-D-GlcNAc-(1-&gt;4)-Mur2Ac(oyl-L-Ala-gamma-D-Glu-L-Lys-D-Ala-D-Ala)-di-trans,octa-cis-undecaprenyl diphosphate = [GlcNAc-(1-&gt;4)-Mur2Ac(oyl-L-Ala-gamma-D-Glu-L-Lys-D-Ala-D-Ala)](n+1)-di-trans,octa-cis-undecaprenyl diphosphate + di-trans,octa-cis-undecaprenyl diphosphate + H(+). It functions in the pathway cell wall biogenesis; peptidoglycan biosynthesis. Peptidoglycan polymerase that catalyzes glycan chain elongation from lipid-linked precursors. The polypeptide is Biosynthetic peptidoglycan transglycosylase (Shigella dysenteriae serotype 1 (strain Sd197)).